Consider the following 664-residue polypeptide: Delta-like protein C (664 aa).

Positions 1-20 (MARVLLTCFFILISSHLGKS) are cleaved as a signal peptide. The Extracellular portion of the chain corresponds to 21 to 511 (SGVFELKVLS…VNSPALPAAL (491 aa)). A DSL domain is found at 154–198 (VVCDEFYHGEECSDFCRPRNDTFGHFNCDAAGNRICLPGWKGDYC). 27 disulfide bridges follow: Cys-156–Cys-165, Cys-169–Cys-181, Cys-189–Cys-198, Cys-203–Cys-214, Cys-207–Cys-220, Cys-222–Cys-231, Cys-234–Cys-245, Cys-240–Cys-251, Cys-253–Cys-262, Cys-269–Cys-281, Cys-275–Cys-291, Cys-293–Cys-302, Cys-309–Cys-320, Cys-314–Cys-329, Cys-331–Cys-340, Cys-347–Cys-358, Cys-352–Cys-368, Cys-370–Cys-379, Cys-386–Cys-397, Cys-391–Cys-406, Cys-408–Cys-417, Cys-424–Cys-435, Cys-429–Cys-444, Cys-446–Cys-455, Cys-462–Cys-473, Cys-467–Cys-482, and Cys-484–Cys-493. An N-linked (GlcNAc...) asparagine glycan is attached at Asn-173. 3 consecutive EGF-like domains span residues 199 to 232 (TEPI…PLCD), 233 to 263 (ECTR…LFCN), and 265 to 303 (DLNF…KNCE). Positions 305–341 (ETNECDSNPCKNGGSCNDQENDYTCTCPQGFYGKNCE) constitute an EGF-like 4; calcium-binding domain. 2 EGF-like domains span residues 343–380 (SAMT…SNCE) and 382–418 (KIDR…SRCE). Residues 420–456 (NIDDCSSNPCQNAGTCVDGINGYTCTCTLGFSGKDCR) enclose the EGF-like 7; calcium-binding domain. Positions 458-494 (RSDACSFMPCQNGGTCYTHFSGPVCQCPAGFMGTQCE) constitute an EGF-like 8 domain. The chain crosses the membrane as a helical span at residues 512–532 (IVSFTLGLITLTLVICAAIVV). The Cytoplasmic portion of the chain corresponds to 533 to 664 (LRQMRQNHKA…IEQRVFATEV (132 aa)).

Post-translationally, ubiquitinated by mib, leading to its endocytosis and subsequent degradation. In terms of tissue distribution, strongly expressed in the early retina, where it precedes other delta proteins. Also expressed in cranial ganglia, in sensory epithelia including ear and lateral line and in scattered epidermal cells. In the mesoderm, expression is visible by 50% epiboly; it is expressed subsequently in the tail bud, in stripes in the presomitic mesoderm and in the posterior half of each somite. Also expressed in notochord, blood vessels and pronephros. In contrast to other delta proteins, it is not expressed in the majority of nascent primary neurons. In somites, it marks the posterior part of each formed somite, while deltaD (dld) marks the anterior part.

It localises to the membrane. Acts as a ligand for Notch receptors and is involved in somitogenesis. Can activate Notch receptors. Required in somite segmentation to keep the oscillations of neighboring presomitic mesoderm cells synchronized. The chain is Delta-like protein C (dlc) from Danio rerio (Zebrafish).